The primary structure comprises 146 residues: Anti-sigma F factor (146 aa).

This sequence belongs to the anti-sigma-factor family.

It carries out the reaction L-seryl-[protein] + ATP = O-phospho-L-seryl-[protein] + ADP + H(+). It catalyses the reaction L-threonyl-[protein] + ATP = O-phospho-L-threonyl-[protein] + ADP + H(+). In terms of biological role, binds to sigma F and blocks its ability to form an RNA polymerase holoenzyme (E-sigma F). Phosphorylates SpoIIAA on a serine residue. This phosphorylation may enable SpoIIAA to act as an anti-anti-sigma factor that counteracts SpoIIAB and thus releases sigma F from inhibition. In Bacillus cereus (strain ATCC 14579 / DSM 31 / CCUG 7414 / JCM 2152 / NBRC 15305 / NCIMB 9373 / NCTC 2599 / NRRL B-3711), this protein is Anti-sigma F factor.